We begin with the raw amino-acid sequence, 421 residues long: uncharacterized protein (421 aa).

This is an uncharacterized protein from Bacillus subtilis (strain 168).